Reading from the N-terminus, the 891-residue chain is MTPMMRQYHEAKEACGDALLFFRMGDFYELFLDDAKVAAGILGLTLTSRDKDSENPTAMAGFPHHQLDQYLQKLIRAGFRAAVCEQVEDPKAAKGLVRREITRVVSAGTLTDEGLLDPKEPNYLAAVFAPSQKAREKAQKEAAKTNDPSGGDVVGIAWAELSSGRFEAGVFPRARLDDELARIGPAEVLHCEDDASVHPDPTATWSWTARPAWSYAAADAEKSLCKQLSVANLEGLGFEDNGDVAIRAAGAVLCYLKETQRGSLDHFRSLTCHNRSPVLQIDAATRRSLEITRTMRTGSREGALLGVIDRTVTPMGSRMLADHLAAPLIDADAITYRTDAVDEFVRNNNLRSDIRTVLGDTYDLTRLLARVATGRTGPRDLRQIAVTLSGLPALKARLAERDSACLTRLESELHLCPELREQLESALNDECPLSAADGNFIREGFDSELDTLRELARGGKRWIAEYQQRQMDETGIANLKVGYNRVFGYYLEVSNAHKDKIPADFIRKQTLKNCERYITPELKEYEEKVLAADEKASSREQMLFTLLRENTHKHLAILQEVANAIAMTDVVASLAEVAAQHHWVRPTLTDDSVLRIEGGRHPVLDVTMAQGEFVPNDCIQSPETGMILLITGPNMAGKSTYIRQVALITLLAQTGSFVPATSAEIGIADRIFARVGASDELSRGQSTFMVEMVETARILNTATSRSLVILDEIGRGTSTYDGLSLAWAITEHLHEQIGARTLFATHYHELAALQETLPRVANLSVAVKEWQDEVVFLHRIVPGSADKSYGIQVARLAGIPVEVNERAKDVLAQLEADHRDSLDRPTIAPPSGVNGKGSGDTYQLTLFGYADHPLIQEIETVDIDSMSPIQAWQFLQEAKAKLSAGPKAVKG.

632–639 is a binding site for ATP; the sequence is GPNMAGKS.

This sequence belongs to the DNA mismatch repair MutS family.

Functionally, this protein is involved in the repair of mismatches in DNA. It is possible that it carries out the mismatch recognition step. This protein has a weak ATPase activity. The protein is DNA mismatch repair protein MutS of Rhodopirellula baltica (strain DSM 10527 / NCIMB 13988 / SH1).